We begin with the raw amino-acid sequence, 620 residues long: Glutathione-regulated potassium-efflux system protein KefC (620 aa).

12 helical membrane-spanning segments follow: residues histidine 4–valine 24, leucine 26–leucine 46, serine 54–leucine 74, glycine 90–leucine 110, valine 114–methionine 134, phenylalanine 149–leucine 169, leucine 178–leucine 198, valine 218–glycine 238, glycine 270–valine 290, leucine 294–valine 314, tryptophan 327–glutamine 347, and alanine 359–threonine 379. The 120-residue stretch at glutamine 399–threonine 518 folds into the RCK N-terminal domain. Residues glutamine 599–isoleucine 620 are disordered.

Belongs to the monovalent cation:proton antiporter 2 (CPA2) transporter (TC 2.A.37) family. KefC subfamily. As to quaternary structure, homodimer. Interacts with the regulatory subunit KefF.

The protein resides in the cell inner membrane. In terms of biological role, pore-forming subunit of a potassium efflux system that confers protection against electrophiles. Catalyzes K(+)/H(+) antiport. The protein is Glutathione-regulated potassium-efflux system protein KefC of Salmonella schwarzengrund (strain CVM19633).